Consider the following 161-residue polypeptide: Dihydrofolate reductase (161 aa).

Residues 1 to 160 enclose the DHFR domain; the sequence is MTMVGLIWAQ…LRYRLYSYHR (160 aa). 7 to 9 lines the substrate pocket; that stretch reads IWA. Residues 8–9 and 16–21 contribute to the NADP(+) site; these read WA and IGRGGD. Substrate is bound by residues aspartate 29 and arginine 34. 45 to 48 lines the NADP(+) pocket; that stretch reads GRRT. Arginine 62 provides a ligand contact to substrate. Residues 67 to 70, glycine 82, and 96 to 101 contribute to the NADP(+) site; these read LSRQ and IGGGQV. Substrate-binding residues include tyrosine 102 and threonine 115.

It belongs to the dihydrofolate reductase family.

It carries out the reaction (6S)-5,6,7,8-tetrahydrofolate + NADP(+) = 7,8-dihydrofolate + NADPH + H(+). The protein operates within cofactor biosynthesis; tetrahydrofolate biosynthesis; 5,6,7,8-tetrahydrofolate from 7,8-dihydrofolate: step 1/1. Key enzyme in folate metabolism. Catalyzes an essential reaction for de novo glycine and purine synthesis, and for DNA precursor synthesis. This Mycobacterium tuberculosis (strain CDC 1551 / Oshkosh) protein is Dihydrofolate reductase (folA).